The primary structure comprises 178 residues: MNTPVSVNEKKDFVKWFLNNYQLKQRECVWILNYLMSHDQLMHKVHFVEHAKYCPRGLIMSANCVKETPFHFFKQNVMTTDAEKSFHDIRLNRDEDIYIQLNFKSSFQNPNYVAVLEENPYLPKHIEVNEKDRLLAERFLEESVFSFRRNRLLKQIDEALDNHDQEAFQRLTAELKTL.

Belongs to the UPF0302 family.

The protein is UPF0302 protein Bcer98_1244 of Bacillus cytotoxicus (strain DSM 22905 / CIP 110041 / 391-98 / NVH 391-98).